Here is a 176-residue protein sequence, read N- to C-terminus: NAD(P)H-quinone oxidoreductase subunit 6, chloroplastic (176 aa).

The next 5 membrane-spanning stretches (helical) occupy residues 10-30 (FLLVFLGSGIILGGLGVVLLT), 32-52 (PIFSAFSLGLVLFCISLFHIP), 60-80 (AAQLLIYVGAINVLIIFAVMF), 107-127 (IFVSLITTILDTSWYGIIWTT), and 152-172 (FFLPFELVSIILLVALIGAIA).

Belongs to the complex I subunit 6 family. NDH is composed of at least 16 different subunits, 5 of which are encoded in the nucleus.

It is found in the plastid. It localises to the chloroplast thylakoid membrane. The enzyme catalyses a plastoquinone + NADH + (n+1) H(+)(in) = a plastoquinol + NAD(+) + n H(+)(out). It catalyses the reaction a plastoquinone + NADPH + (n+1) H(+)(in) = a plastoquinol + NADP(+) + n H(+)(out). Functionally, NDH shuttles electrons from NAD(P)H:plastoquinone, via FMN and iron-sulfur (Fe-S) centers, to quinones in the photosynthetic chain and possibly in a chloroplast respiratory chain. The immediate electron acceptor for the enzyme in this species is believed to be plastoquinone. Couples the redox reaction to proton translocation, and thus conserves the redox energy in a proton gradient. The polypeptide is NAD(P)H-quinone oxidoreductase subunit 6, chloroplastic (ndhG) (Buxus microphylla (Littleleaf boxwood)).